The following is a 455-amino-acid chain: Probable xyloglucan galactosyltransferase GT17 (455 aa).

Topologically, residues 1–34 (MTFNKRQVKINHWPEKNDKEKQKYSKNRETVKLT) are cytoplasmic. A helical; Signal-anchor for type II membrane protein membrane pass occupies residues 35–55 (LLTLLLLCSICFLFLTLNFPF). The Lumenal portion of the chain corresponds to 56-455 (TIEFTASIPR…QARDNVVVSL (400 aa)). N-linked (GlcNAc...) asparagine glycans are attached at residues Asn70, Asn169, Asn230, Asn390, and Asn426.

The protein belongs to the glycosyltransferase 47 family. Expressed in roots and hypocotyls.

It localises to the golgi apparatus membrane. Functionally, functions in xyloglucan synthesis by adding side chains to the xylosylated glucan backbone. Involved in the galactosylation of hemicellulose xyloglucan. In Arabidopsis thaliana (Mouse-ear cress), this protein is Probable xyloglucan galactosyltransferase GT17.